Here is a 377-residue protein sequence, read N- to C-terminus: Succinyl-diaminopimelate desuccinylase (377 aa).

Position 66 (His66) interacts with Zn(2+). Asp68 is a catalytic residue. Asp99 contacts Zn(2+). Glu133 serves as the catalytic Proton acceptor. Zn(2+) is bound by residues Glu134, Glu162, and His348.

Belongs to the peptidase M20A family. DapE subfamily. As to quaternary structure, homodimer. It depends on Zn(2+) as a cofactor. Requires Co(2+) as cofactor.

It catalyses the reaction N-succinyl-(2S,6S)-2,6-diaminopimelate + H2O = (2S,6S)-2,6-diaminopimelate + succinate. It functions in the pathway amino-acid biosynthesis; L-lysine biosynthesis via DAP pathway; LL-2,6-diaminopimelate from (S)-tetrahydrodipicolinate (succinylase route): step 3/3. Functionally, catalyzes the hydrolysis of N-succinyl-L,L-diaminopimelic acid (SDAP), forming succinate and LL-2,6-diaminopimelate (DAP), an intermediate involved in the bacterial biosynthesis of lysine and meso-diaminopimelic acid, an essential component of bacterial cell walls. This chain is Succinyl-diaminopimelate desuccinylase, found in Histophilus somni (strain 2336) (Haemophilus somnus).